The sequence spans 57 residues: uncharacterized protein (57 aa).

The helical transmembrane segment at 24–44 (LWVTLLLTMFFTAVEIIGGLI) threads the bilayer.

To cation A.eutrophus efflux system protein CzcD.

It localises to the cell membrane. This is an uncharacterized protein from Bacillus caldolyticus.